The sequence spans 420 residues: MAKSRLFCLLVALGSVFMILFIIVYWDNVGTANLNLHTSFSKSLPFQSSEELSTAVTATRNRFVSDVDVFLNSFLNLSTRRSELQSTKAEKMPLRGSSSLEENARGYDWSTKEKLEDAILDQEMIQQERKLNLLQFCGNSSFGFPTKERSFDDIPNRELDHLIVDDRHGIIYCYVPKVACTNWKRVMIVLSESLLDKKGVPYQDPLLIPREDVHNTSSHLTFNKFWRRYGKFSRHMMKIKLKKYTKFLFVRDPFVRLISAFRSKFELENEDFYRSFAVPILTRFSNTTRVPDTVGEAFSSGTMPSFSQFIQYLLDPQTEEQKPFNEHWRQVYRLCHPCQIEYDFIGKLETLGEDTALLLRQLNLDTLFQFPPSYRNRTASSWEEDWYSKLPIAWRKKLYKLFEADFVLFGYPKPDDLLSV.

Residues 1-5 lie on the Cytoplasmic side of the membrane; that stretch reads MAKSR. Residues 6 to 26 traverse the membrane as a helical; Signal-anchor for type II membrane protein segment; sequence LFCLLVALGSVFMILFIIVYW. Residues 27-420 are Lumenal-facing; sequence DNVGTANLNL…YPKPDDLLSV (394 aa). N-linked (GlcNAc...) asparagine glycosylation is found at Asn-76 and Asn-139. Residue 176–182 participates in 3'-phosphoadenylyl sulfate binding; sequence PKVACTN. A glycan (N-linked (GlcNAc...) asparagine) is linked at Asn-215. 251-259 provides a ligand contact to 3'-phosphoadenylyl sulfate; that stretch reads RDPFVRLIS. Residues Asn-286 and Asn-376 are each glycosylated (N-linked (GlcNAc...) asparagine).

The protein belongs to the sulfotransferase 2 family.

The protein resides in the golgi apparatus membrane. It catalyses the reaction chondroitin beta-D-glucuronate + n 3'-phosphoadenylyl sulfate = chondroitin 4'-sulfate + n adenosine 3',5'-bisphosphate + n H(+). Catalyzes the transfer of sulfate to position 4 of the N-acetylgalactosamine (GalNAc) residue of chondroitin and desulfated dermatan sulfate. Chondroitin sulfate constitutes the predominant proteoglycan present in cartilage and is distributed on the surfaces of many cells and extracellular matrices. In Xenopus laevis (African clawed frog), this protein is Carbohydrate sulfotransferase 12 (chst12).